The sequence spans 262 residues: Hemin import ATP-binding protein HmuV (262 aa).

Residues 5–242 form the ABC transporter domain; that stretch reads LEARKAGFAT…ELIGAVFDVE (238 aa). 37–44 is a binding site for ATP; that stretch reads GPNGAGKS.

This sequence belongs to the ABC transporter superfamily. Heme (hemin) importer (TC 3.A.1.14.5) family. As to quaternary structure, the complex is composed of two ATP-binding proteins (HmuV), two transmembrane proteins (HmuU) and a solute-binding protein (HmuT).

It localises to the cell inner membrane. Its function is as follows. Part of the ABC transporter complex HmuTUV involved in hemin import. Responsible for energy coupling to the transport system. This is Hemin import ATP-binding protein HmuV from Rhodopseudomonas palustris (strain HaA2).